Here is a 204-residue protein sequence, read N- to C-terminus: Altered inheritance of mitochondria protein 20 (204 aa).

A helical membrane pass occupies residues 6–26; the sequence is VAVGTAVGIPIAVGVIIALIF.

The protein belongs to the SKG1 family.

It localises to the vacuole membrane. Its function is as follows. Involved in cell cycle progression and surviving DNA damage. This is Altered inheritance of mitochondria protein 20 (AIM20) from Saccharomyces cerevisiae (strain RM11-1a) (Baker's yeast).